The primary structure comprises 428 residues: Gamma-glutamyl phosphate reductase (428 aa).

This sequence belongs to the gamma-glutamyl phosphate reductase family.

The protein localises to the cytoplasm. It catalyses the reaction L-glutamate 5-semialdehyde + phosphate + NADP(+) = L-glutamyl 5-phosphate + NADPH + H(+). It participates in amino-acid biosynthesis; L-proline biosynthesis; L-glutamate 5-semialdehyde from L-glutamate: step 2/2. Catalyzes the NADPH-dependent reduction of L-glutamate 5-phosphate into L-glutamate 5-semialdehyde and phosphate. The product spontaneously undergoes cyclization to form 1-pyrroline-5-carboxylate. This is Gamma-glutamyl phosphate reductase from Mesorhizobium japonicum (strain LMG 29417 / CECT 9101 / MAFF 303099) (Mesorhizobium loti (strain MAFF 303099)).